The primary structure comprises 189 residues: GTP cyclohydrolase 1 (189 aa).

Residues Cys79, His82, and Cys150 each coordinate Zn(2+).

This sequence belongs to the GTP cyclohydrolase I family. Toroid-shaped homodecamer, composed of two pentamers of five dimers.

It carries out the reaction GTP + H2O = 7,8-dihydroneopterin 3'-triphosphate + formate + H(+). The protein operates within cofactor biosynthesis; 7,8-dihydroneopterin triphosphate biosynthesis; 7,8-dihydroneopterin triphosphate from GTP: step 1/1. This chain is GTP cyclohydrolase 1, found in Rickettsia massiliae (strain Mtu5).